A 192-amino-acid polypeptide reads, in one-letter code: Peptidyl-tRNA hydrolase (192 aa).

Position 18 (Tyr18) interacts with tRNA. His23 (proton acceptor) is an active-site residue. Residues Phe69, Asn71, and Asn117 each coordinate tRNA.

This sequence belongs to the PTH family. In terms of assembly, monomer.

Its subcellular location is the cytoplasm. The enzyme catalyses an N-acyl-L-alpha-aminoacyl-tRNA + H2O = an N-acyl-L-amino acid + a tRNA + H(+). Functionally, hydrolyzes ribosome-free peptidyl-tRNAs (with 1 or more amino acids incorporated), which drop off the ribosome during protein synthesis, or as a result of ribosome stalling. In terms of biological role, catalyzes the release of premature peptidyl moieties from peptidyl-tRNA molecules trapped in stalled 50S ribosomal subunits, and thus maintains levels of free tRNAs and 50S ribosomes. This chain is Peptidyl-tRNA hydrolase, found in Neisseria gonorrhoeae (strain ATCC 700825 / FA 1090).